Here is a 283-residue protein sequence, read N- to C-terminus: Ribonuclease P protein subunit p38 (283 aa).

A2 carries the post-translational modification N-acetylalanine. Phosphoserine is present on residues S12, S226, and S235.

It belongs to the eukaryotic ribosomal protein eL8 family. In terms of assembly, component of nuclear RNase P and RNase MRP ribonucleoproteins. RNase P consists of a catalytic RNA moiety and about 10 protein subunits; POP1, POP4, POP5, POP7, RPP14, RPP21, RPP25, RPP30, RPP38 and RPP40. Within the RNase P complex, POP1, POP7 and RPP25 form the 'finger' subcomplex, POP5, RPP14, RPP40 and homodimeric RPP30 form the 'palm' subcomplex, and RPP21, POP4 and RPP38 form the 'wrist' subcomplex. All subunits of the RNase P complex interact with the catalytic RNA. Several subunits of RNase P are also part of the RNase MRP complex. RNase MRP consists of a catalytic RNA moiety and about 8 protein subunits; POP1, POP7, RPP25, RPP30, RPP38, RPP40 and possibly also POP4 and POP5.

The protein localises to the nucleus. It is found in the nucleolus. Its function is as follows. Component of ribonuclease P, a ribonucleoprotein complex that generates mature tRNA molecules by cleaving their 5'-ends. Also a component of the MRP ribonuclease complex, which cleaves pre-rRNA sequences. In Homo sapiens (Human), this protein is Ribonuclease P protein subunit p38 (RPP38).